A 735-amino-acid chain; its full sequence is uncharacterized protein (735 aa).

Positions 25–175 (DLSCLSPDLL…CIAAVLAGLL (151 aa)) constitute a GAF domain. One can recognise a PAS domain in the interval 185–255 (SEAARRAMLD…RQGFMRHLAT (71 aa)). The 51-residue stretch at 263–313 (RLVEVEALRADGSVFPAELTVNEHRAGGRRLFSAFVRDISDRITSRRALER) folds into the PAC domain. Residues 342–464 (GAVVLMLRDL…DGHLLHFAEH (123 aa)) enclose the GGDEF domain. The EAL domain occupies 472 to 732 (RLELEMALRD…VAGTLPETLA (261 aa)).

This is an uncharacterized protein from Azorhizobium caulinodans (strain ATCC 43989 / DSM 5975 / JCM 20966 / LMG 6465 / NBRC 14845 / NCIMB 13405 / ORS 571).